Reading from the N-terminus, the 205-residue chain is Probable GTP-binding protein EngB (205 aa).

The EngB-type G domain occupies 22–194 (ELPEIAFAGR…WESILDLCEI (173 aa)). Residues 30-37 (GRSNVGKS), 57-61 (GRTQL), 75-78 (DLPG), 142-145 (TKAD), and 173-175 (FSA) each bind GTP. 2 residues coordinate Mg(2+): S37 and T59.

The protein belongs to the TRAFAC class TrmE-Era-EngA-EngB-Septin-like GTPase superfamily. EngB GTPase family. Mg(2+) serves as cofactor.

Its function is as follows. Necessary for normal cell division and for the maintenance of normal septation. The protein is Probable GTP-binding protein EngB of Desulfatibacillum aliphaticivorans.